The chain runs to 559 residues: T-complex protein 1 subunit gamma (559 aa).

Cysteine 369 and cysteine 375 form a disulfide bridge. The disordered stretch occupies residues 537-559; it reads GGASVTDGNGQEIPETFGDARDG.

The protein belongs to the TCP-1 chaperonin family. In terms of assembly, heterooligomeric complex of about 850 to 900 kDa that forms two stacked rings, 12 to 16 nm in diameter.

It localises to the cytoplasm. Molecular chaperone; assists the folding of proteins upon ATP hydrolysis. Known to play a role, in vitro, in the folding of actin and tubulin. The polypeptide is T-complex protein 1 subunit gamma (Tetrahymena pyriformis).